A 107-amino-acid polypeptide reads, in one-letter code: Immunoglobulin kappa constant (107 aa).

Positions 6 to 103 constitute an Ig-like domain; the sequence is PTVSIFPPSS…STSPIVKSFN (98 aa). A disulfide bond links Cys27 and Cys87.

The polypeptide is Immunoglobulin kappa constant (Mus musculus (Mouse)).